The sequence spans 240 residues: Uridylate kinase (240 aa).

Residue 9–12 (KLSG) participates in ATP binding. G51 contacts UMP. G52 and R56 together coordinate ATP. UMP is bound by residues D71 and 132–139 (TGNPFFTT). Positions 159, 165, and 168 each coordinate ATP.

Belongs to the UMP kinase family. As to quaternary structure, homohexamer.

It localises to the cytoplasm. The enzyme catalyses UMP + ATP = UDP + ADP. It participates in pyrimidine metabolism; CTP biosynthesis via de novo pathway; UDP from UMP (UMPK route): step 1/1. Inhibited by UTP. In terms of biological role, catalyzes the reversible phosphorylation of UMP to UDP. In Synechococcus elongatus (strain ATCC 33912 / PCC 7942 / FACHB-805) (Anacystis nidulans R2), this protein is Uridylate kinase.